The sequence spans 199 residues: Holliday junction branch migration complex subunit RuvA (199 aa).

The segment at 1–64 (MIGRISGLLL…EDGHFLYGFA (64 aa)) is domain I. Residues 65 to 143 (TDEERTAFRQ…KALPQVAGAR (79 aa)) form a domain II region. The tract at residues 144-154 (LAAVAGGAPDA) is flexible linker. A domain III region spans residues 154-199 (AKSDILNALLALGYNEKEALGAMKGLAEDTGVSDGIRQALKLLSKA).

The protein belongs to the RuvA family. In terms of assembly, homotetramer. Forms an RuvA(8)-RuvB(12)-Holliday junction (HJ) complex. HJ DNA is sandwiched between 2 RuvA tetramers; dsDNA enters through RuvA and exits via RuvB. An RuvB hexamer assembles on each DNA strand where it exits the tetramer. Each RuvB hexamer is contacted by two RuvA subunits (via domain III) on 2 adjacent RuvB subunits; this complex drives branch migration. In the full resolvosome a probable DNA-RuvA(4)-RuvB(12)-RuvC(2) complex forms which resolves the HJ.

Its subcellular location is the cytoplasm. Its function is as follows. The RuvA-RuvB-RuvC complex processes Holliday junction (HJ) DNA during genetic recombination and DNA repair, while the RuvA-RuvB complex plays an important role in the rescue of blocked DNA replication forks via replication fork reversal (RFR). RuvA specifically binds to HJ cruciform DNA, conferring on it an open structure. The RuvB hexamer acts as an ATP-dependent pump, pulling dsDNA into and through the RuvAB complex. HJ branch migration allows RuvC to scan DNA until it finds its consensus sequence, where it cleaves and resolves the cruciform DNA. The chain is Holliday junction branch migration complex subunit RuvA from Azoarcus sp. (strain BH72).